The primary structure comprises 807 residues: Putative histidine biosynthesis bifunctional protein HisCD (807 aa).

The interval 1 to 440 (MTDHFDTLIR…ALNIAGQGVN (440 aa)) is histidinol dehydrogenase. Zn(2+) is bound by residues Q261 and H264. Catalysis depends on residues E328 and H329. Zn(2+) is bound by residues D362 and H421. The segment at 441–807 (MNNIFDANLL…VNEQPKEIAN (367 aa)) is histidinol-phosphate aminotransferase. K655 carries the N6-(pyridoxal phosphate)lysine modification.

This sequence in the N-terminal section; belongs to the histidinol dehydrogenase family. In the C-terminal section; belongs to the class-II pyridoxal-phosphate-dependent aminotransferase family. Histidinol-phosphate aminotransferase subfamily. In terms of assembly, homodimer. Zn(2+) serves as cofactor. Requires pyridoxal 5'-phosphate as cofactor.

The catalysed reaction is L-histidinol phosphate + 2-oxoglutarate = 3-(imidazol-4-yl)-2-oxopropyl phosphate + L-glutamate. It carries out the reaction L-histidinol + 2 NAD(+) + H2O = L-histidine + 2 NADH + 3 H(+). Its pathway is amino-acid biosynthesis; L-histidine biosynthesis; L-histidine from 5-phospho-alpha-D-ribose 1-diphosphate: step 7/9. It participates in amino-acid biosynthesis; L-histidine biosynthesis; L-histidine from 5-phospho-alpha-D-ribose 1-diphosphate: step 9/9. Its function is as follows. Catalyzes the sequential NAD-dependent oxidations of L-histidinol to L-histidinaldehyde and then to L-histidine. The polypeptide is Putative histidine biosynthesis bifunctional protein HisCD (hisCD) (Photorhabdus laumondii subsp. laumondii (strain DSM 15139 / CIP 105565 / TT01) (Photorhabdus luminescens subsp. laumondii)).